A 131-amino-acid chain; its full sequence is MSLSDGIGDFLTRIRNAQLAMHRETRVLFSKVNSSILKILKEEGYILNYEKQESDSIPSLVVQLKYYDKSPVINDIARVSKPGCRYYSKCKDISKAYNGLGIFIISTPKGVMTDYNARRLKVGGEVLCRVF.

This sequence belongs to the universal ribosomal protein uS8 family. As to quaternary structure, part of the 30S ribosomal subunit. Contacts proteins S5 and S12.

Its function is as follows. One of the primary rRNA binding proteins, it binds directly to 16S rRNA central domain where it helps coordinate assembly of the platform of the 30S subunit. This is Small ribosomal subunit protein uS8 from Wolbachia pipientis subsp. Culex pipiens (strain wPip).